A 569-amino-acid chain; its full sequence is ABC1 family protein MCP2 (569 aa).

The transit peptide at 1 to 18 directs the protein to the mitochondrion; it reads MMTKAFFNKLPFEVFRRY. The Mitochondrial matrix segment spans residues 19–34; sequence VRTGKSIPQRSPRTRK. Residues 35–51 traverse the membrane as a helical segment; it reads SLLVGGTIASAVVLYNF. Residues 52–569 are Mitochondrial intermembrane-facing; that stretch reads NDTFHDSVKH…KFIPKTWLSS (518 aa).

It belongs to the protein kinase superfamily. ADCK protein kinase family.

The protein resides in the mitochondrion. It is found in the mitochondrion inner membrane. Its function is as follows. Component of MIOREX complexes, large expressome-like assemblies of ribosomes with factors involved in all the steps of post-transcriptional gene expression. Involved in mitochondrial lipid homeostasis. The protein is ABC1 family protein MCP2 of Saccharomyces cerevisiae (strain ATCC 204508 / S288c) (Baker's yeast).